The following is a 239-amino-acid chain: tRNA (guanine-N(1)-)-methyltransferase (239 aa).

Residues Gly-108 and 127–132 (LGDFVL) contribute to the S-adenosyl-L-methionine site.

The protein belongs to the RNA methyltransferase TrmD family. In terms of assembly, homodimer.

It is found in the cytoplasm. It catalyses the reaction guanosine(37) in tRNA + S-adenosyl-L-methionine = N(1)-methylguanosine(37) in tRNA + S-adenosyl-L-homocysteine + H(+). Functionally, specifically methylates guanosine-37 in various tRNAs. This chain is tRNA (guanine-N(1)-)-methyltransferase, found in Streptococcus pyogenes serotype M6 (strain ATCC BAA-946 / MGAS10394).